Here is a 23-residue protein sequence, read N- to C-terminus: Phallacidin proprotein (23 aa).

Residue Pro1 is a propeptide. A cross-link (cyclopeptide (Ala-Pro)) is located at residues 2 to 8; that stretch reads AWLVDCP. Residues 3 to 7 constitute a cross-link (2'-cysteinyl-6'-hydroxytryptophan sulfoxide (Trp-Cys)); the sequence is WLVDC. A propeptide spanning residues 9 to 23 is cleaved from the precursor; the sequence is CVGDDISRLLTRGEK.

This sequence belongs to the MSDIN fungal toxin family. In terms of processing, processed by the macrocyclase-peptidase enzyme POPB to yield a toxic cyclic heptapeptide. POPB first removes 10 residues from the N-terminus. Conformational trapping of the remaining peptide forces the enzyme to release this intermediate rather than proceed to macrocyclization. The enzyme rebinds the remaining peptide in a different conformation and catalyzes macrocyclization of the N-terminal 7 residues.

Functionally, major toxin that belongs to the bicyclic heptapeptides called phallotoxins. Although structurally related to amatoxins, phallotoxins have a different mode of action, which is the stabilization of F-actin. Phallotoxins are poisonous when administered parenterally, but not orally because of poor absorption. The chain is Phallacidin proprotein from Amanita rimosa.